Consider the following 499-residue polypeptide: Serine/threonine-protein phosphatase 5 (499 aa).

Residues 1-23 (MAMAEGERTECAEPPRDEPPAEG) are disordered. Alanine 2 is subject to N-acetylalanine. 3 TPR repeats span residues 28–61 (AEEL…NPSN), 62–95 (AIYY…DKKY), and 96–129 (IKGY…KPND). Positions 200-499 (DQKKLHRKCA…ANTLLQLGMM (300 aa)) are catalytic. Residues aspartate 242, histidine 244, and aspartate 271 each contribute to the Mg(2+) site. Histidine 244 is a binding site for substrate. Substrate-binding positions include arginine 275 and 303-304 (NH). Asparagine 303 serves as a coordination point for Mg(2+). Histidine 304 serves as the catalytic Proton donor/acceptor. Histidine 352 contacts Mg(2+). Substrate contacts are provided by arginine 400 and histidine 427. Histidine 427 is a binding site for Mg(2+). A required for autoinhibition region spans residues 495-499 (QLGMM).

Belongs to the PPP phosphatase family. PP-5 (PP-T) subfamily. In terms of assembly, probably forms a complex composed of chaperones HSP90 and HSP70, co-chaperones STIP1/HOP, CDC37, PPP5C, PTGES3/p23, TSC1 and client protein TSC2. Probably forms a complex composed of chaperones HSP90 and HSP70, co-chaperones CDC37, PPP5C, TSC1 and client protein TSC2, CDK4, AKT, RAF1 and NR3C1; this complex does not contain co-chaperones STIP1/HOP and PTGES3/p23. Part of a complex with HSP90/HSP90AA1 and steroid receptors. Interacts (via TPR repeats) with HSP90AA1 (via TPR repeat-binding motif) or HSPA1A/HSPA1B; the interaction is direct and activates the phosphatase activity. Dissociates from HSPA1A/HSPA1B and HSP90AA1 in response to arachidonic acid. Interacts with CPNE1 (via VWFA domain). Interacts with CDC16, CDC27. Interacts with KLHDC10 (via the 6 Kelch repeats); inhibits the phosphatase activity on MAP3K5. Interacts with ATM and ATR; both interactions are induced by DNA damage and enhance ATM and ATR kinase activity. Interacts with RAD17; reduced by DNA damage. Interacts with nuclear receptors such as NR3C1/GCR and PPARG (activated by agonist); regulates their transactivation activities. Interacts (via TPR repeats) with S100 proteins S100A1, S100A2, S100A6, S100B and S100P; the interactions are calcium-dependent, strongly activate PPP5C phosphatase activity and compete with HSP90AA1 and MAP3K5 interactions. Interacts with SMAD2 and SMAD3 but not with SMAD1; decreases SMAD3 phosphorylation and protein levels. Interacts (via TPR repeats) with CRY1 and CRY2; the interaction with CRY2 down-regulates the phosphatase activity on CSNK1E. Interacts (via TPR repeats) with the active form of RAC1, GNA12 or GNA13; these interactions activate the phosphatase activity and translocate PPP5C to the cell membrane. Interacts with FLCN. Requires Mg(2+) as cofactor. It depends on Mn(2+) as a cofactor. Post-translationally, activated by at least two different proteolytic cleavages producing a 56 kDa and a 50 kDa form. As to expression, predominantly found in brain and, in lower levels, in testis, but was nearly undetectable in spleen, lung, skeletal muscle, kidney and liver.

It localises to the nucleus. The protein resides in the cytoplasm. Its subcellular location is the cell membrane. The catalysed reaction is O-phospho-L-seryl-[protein] + H2O = L-seryl-[protein] + phosphate. The enzyme catalyses O-phospho-L-threonyl-[protein] + H2O = L-threonyl-[protein] + phosphate. Autoinhibited. In the autoinhibited state, the TPR domain interacts with the catalytic region and prevents substrate access to the catalytic pocket. Allosterically activated by various polyunsaturated fatty acids, free long-chain fatty-acids and long-chain fatty acyl-CoA esters, arachidonic acid being the most effective activator. HSP90A and probably RAC1, GNA12 and GNA13 can also release the autoinhibition by the TPR repeat. Activation by RAC1, GNA12 and GNA13 is synergistic with the one produced by fatty acids binding. Inhibited by okadaic acid. Functionally, serine/threonine-protein phosphatase that dephosphorylates a myriad of proteins involved in different signaling pathways including the kinases CSNK1E, ASK1/MAP3K5, PRKDC and RAF1, the nuclear receptors NR3C1, PPARG, ESR1 and ESR2, SMAD proteins and TAU/MAPT. Implicated in wide ranging cellular processes, including apoptosis, differentiation, DNA damage response, cell survival, regulation of ion channels or circadian rhythms, in response to steroid and thyroid hormones, calcium, fatty acids, TGF-beta as well as oxidative and genotoxic stresses. Participates in the control of DNA damage response mechanisms such as checkpoint activation and DNA damage repair through, for instance, the regulation ATM/ATR-signaling and dephosphorylation of PRKDC and TP53BP1. Inhibits ASK1/MAP3K5-mediated apoptosis induced by oxidative stress. Plays a positive role in adipogenesis, mainly through the dephosphorylation and activation of PPARG transactivation function. Also dephosphorylates and inhibits the anti-adipogenic effect of NR3C1. Regulates the circadian rhythms, through the dephosphorylation and activation of CSNK1E. May modulate TGF-beta signaling pathway by the regulation of SMAD3 phosphorylation and protein expression levels. Dephosphorylates and may play a role in the regulation of TAU/MAPT. Through their dephosphorylation, may play a role in the regulation of ions channels such as KCNH2. Dephosphorylate FNIP1, disrupting interaction with HSP90AA1/Hsp90. The protein is Serine/threonine-protein phosphatase 5 (Ppp5c) of Rattus norvegicus (Rat).